Reading from the N-terminus, the 475-residue chain is Putative aldehyde dehydrogenase (475 aa).

NAD(+) contacts are provided by residues 146–147 (WN) and 223–224 (GS). Glu-245 functions as the Proton acceptor in the catalytic mechanism. Leu-246 is a binding site for NAD(+). Cys-279 functions as the Nucleophile in the catalytic mechanism. Glu-379 lines the NAD(+) pocket.

Belongs to the aldehyde dehydrogenase family.

The catalysed reaction is an aldehyde + NAD(+) + H2O = a carboxylate + NADH + 2 H(+). The chain is Putative aldehyde dehydrogenase from Staphylococcus aureus (strain USA300).